The chain runs to 170 residues: UPF0260 protein RPB_3505 (170 aa).

Belongs to the UPF0260 family.

In Rhodopseudomonas palustris (strain HaA2), this protein is UPF0260 protein RPB_3505.